The chain runs to 519 residues: Sorting nexin-2 (519 aa).

2 disordered regions span residues 1 to 20 and 30 to 103; these read MAAEREPPPLGDGKPTDFEE and STVS…VTPV. 2 stretches are compositionally biased toward low complexity: residues 30–44 and 93–103; these read STVSTLESSPSSPDP and SSETSPAVTPV. A Phosphoserine modification is found at Ser-97. Residues Thr-101 and Thr-104 each carry the phosphothreonine modification. Ser-117 and Ser-119 each carry phosphoserine. Positions 140–269 constitute a PX domain; the sequence is FDIEIGVSDP…QFLESSELPR (130 aa). A 1,2-diacyl-sn-glycero-3-phospho-(1D-myo-inositol-3-phosphate) contacts are provided by Arg-183, Ser-185, Lys-211, and Arg-235. Phosphoserine is present on Ser-185. Positions 260–519 are interaction with RhoG; sequence QFLESSELPR…AFLPEAKAIA (260 aa). Position 277 is a phosphoserine (Ser-277). The interval 278–295 is membrane-binding amphipathic helix; it reads GAGILRMVNKAADAVNKM. A BAR domain is found at 299–519; sequence MNESDAWFEE…AFLPEAKAIA (221 aa). Position 469 is an N6-acetyllysine (Lys-469).

It belongs to the sorting nexin family. As to quaternary structure, predominantly forms heterodimers with BAR domain-containing sorting nexins SNX5, SNX6 and SNX32; can self-associate to form homodimers. The heterodimers are proposed to self-assemble into helical arrays on the membrane to stabilize and expand local membrane curvature underlying endosomal tubule formation. Thought to be a component of the originally described retromer complex (also called SNX-BAR retromer) which is a pentamer containing the heterotrimeric retromer cargo-selective complex (CSC), also decribed as vacuolar protein sorting subcomplex (VPS) and a heterodimeric membrane-deforming subcomplex formed between SNX1 or SNX2 and SNX5 or SNX6 (also called SNX-BAR subcomplex); the respective CSC and SNX-BAR subcomplexes associate with low affinity. Interacts with SNX5, SNX6, SNX32, VPS26A, VPS29, VPS35, FNBP1, KALRN, RHOG (GDP-bound form).

Its subcellular location is the early endosome membrane. It is found in the cell projection. The protein resides in the lamellipodium. Functionally, involved in several stages of intracellular trafficking. Interacts with membranes containing phosphatidylinositol 3-phosphate (PtdIns(3P)) or phosphatidylinositol 3,5-bisphosphate (PtdIns(3,5)P2). Acts in part as component of the retromer membrane-deforming SNX-BAR subcomplex. The SNX-BAR retromer mediates retrograde transport of cargo proteins from endosomes to the trans-Golgi network (TGN) and is involved in endosome-to-plasma membrane transport for cargo protein recycling. The SNX-BAR subcomplex functions to deform the donor membrane into a tubular profile called endosome-to-TGN transport carrier (ETC). Can sense membrane curvature and has in vitro vesicle-to-membrane remodeling activity. Required for retrograde endosome-to-TGN transport of TGN38. Promotes KALRN- and RHOG-dependent but retromer-independent membrane remodeling such as lamellipodium formation; the function is dependent on GEF activity of KALRN. This Bos taurus (Bovine) protein is Sorting nexin-2 (SNX2).